We begin with the raw amino-acid sequence, 558 residues long: Suppressor of zyg-1 protein 20 (558 aa).

Residues 45-146 (KVKAEESSGV…ARNRILGTEY (102 aa)) enclose the SUZ domain. Disordered stretches follow at residues 50–132 (ESSG…ERQA), 205–241 (FTQP…QQSL), and 374–558 (QRNQ…NRPQ). The segment covering 69–81 (EEPKRVFLRRPKD) has biased composition (basic and acidic residues). A compositionally biased stretch (polar residues) spans 94–109 (PPTSADTEEQPVTNVR). Basic and acidic residues predominate over residues 117–131 (NQKEKQPAPTYEERQ). Low complexity-rich tracts occupy residues 374–394 (QRNQ…QNRQ) and 424–477 (NNGQ…QQQQ). 2 stretches are compositionally biased toward polar residues: residues 478–508 (NKSG…SQNP) and 545–558 (SASQ…NRPQ).

As to quaternary structure, interacts (via C-terminus) with atx-2 (via C-terminus); the interaction is RNA independent. Interacts with let-92. Phosphorylated. May be dephosphorylated by let-92.

It is found in the cytoplasm. It localises to the cytoskeleton. The protein resides in the microtubule organizing center. Its subcellular location is the centrosome. The protein localises to the centriole. It is found in the nucleus. It localises to the nucleolus. The protein resides in the chromosome. Its function is as follows. RNA binding protein that is required for normal cell division and cytokinesis during embryonic development. Functions with RNA-binding protein atx-2 to ensure embryonic cell division, and to this end, plays a role in the regulation of centrosome assembly, position and size, and in astral microtubule outgrowth and nucleation. Furthermore, negatively regulates the levels of the protein kinase zyg-1 at the centrosome. Also involved in ensuring centrosome attachment to the nuclear envelope. The chain is Suppressor of zyg-1 protein 20 from Caenorhabditis elegans.